A 424-amino-acid polypeptide reads, in one-letter code: Tyrosine--tRNA ligase (424 aa).

Y33 contributes to the L-tyrosine binding site. The 'HIGH' region signature appears at 38 to 47; that stretch reads PSADSLHIGH. 2 residues coordinate L-tyrosine: Y170 and Q174. Positions 230–234 match the 'KMSKS' region motif; sequence KFGKT. Position 233 (K233) interacts with ATP. An S4 RNA-binding domain is found at 357–424; it reads MSLIDALVRC…RRHYHLIRLV (68 aa).

The protein belongs to the class-I aminoacyl-tRNA synthetase family. TyrS type 1 subfamily. Homodimer.

It is found in the cytoplasm. It catalyses the reaction tRNA(Tyr) + L-tyrosine + ATP = L-tyrosyl-tRNA(Tyr) + AMP + diphosphate + H(+). Functionally, catalyzes the attachment of tyrosine to tRNA(Tyr) in a two-step reaction: tyrosine is first activated by ATP to form Tyr-AMP and then transferred to the acceptor end of tRNA(Tyr). This is Tyrosine--tRNA ligase from Roseiflexus castenholzii (strain DSM 13941 / HLO8).